The following is a 289-amino-acid chain: 3-hydroxy-16-methoxy-2,3-dihydrotabersonine N-methyltransferase (289 aa).

Residues 71 to 80 (MLDVGSGLGG) form an SAM motif I region. An SAM motif II region spans residues 134–142 (GKFDVVFTI). The tract at residues 161–170 (VAAPGAAIII) is SAM motif III. The short motif at 287–289 (KSI) is the Microbody targeting signal element.

It belongs to the class I-like SAM-binding methyltransferase superfamily. gTMT family. In terms of assembly, homodimer. Mainly expressed in young leaves, and, to a lower extent, in mature leaves, flowers, stems and roots (at protein level).

Its subcellular location is the thylakoid. The protein localises to the peroxisome. It carries out the reaction (3R)-3-hydroxy-16-methoxy-2,3-dihydrotabersonine + S-adenosyl-L-methionine = deacetoxyvindoline + S-adenosyl-L-homocysteine + H(+). Its pathway is alkaloid biosynthesis; vindoline biosynthesis. Its activity is regulated as follows. Inhibited by gamma-tocopherol. S-adenosyl-L-methionine-dependent N-methyltransferase that catalyzes a nitrogen methylation involved in vindoline biosynthesis. Displays a strict requirement for a 2,3-dihydro bond in the aspidosperma skeleton. Can use 2,3-dihydrotabersonine, 2,3-dihydro-3-hydroxytabersonine and 2,3,6,7-tetraydro-3-hydroxytabersonine as substrates, but not tabersonine, vincadifformine, 21-hydroxycyclolochnericine, tryptamine, norharmane, harmaline, catharanthine, norajmaline, ajmaline, serpentine, ajmalicine, yohimbine or gamma-tocopherol. Inactive with picrinine as substrate. In Catharanthus roseus (Madagascar periwinkle), this protein is 3-hydroxy-16-methoxy-2,3-dihydrotabersonine N-methyltransferase.